Reading from the N-terminus, the 337-residue chain is Lipoyl synthase (337 aa).

[4Fe-4S] cluster is bound by residues cysteine 81, cysteine 86, cysteine 92, cysteine 107, cysteine 111, cysteine 114, and serine 323. One can recognise a Radical SAM core domain in the interval 93-312; it reads FSHGTATFMI…EDYGNALGFS (220 aa).

Belongs to the radical SAM superfamily. Lipoyl synthase family. Requires [4Fe-4S] cluster as cofactor.

It is found in the cytoplasm. It carries out the reaction [[Fe-S] cluster scaffold protein carrying a second [4Fe-4S](2+) cluster] + N(6)-octanoyl-L-lysyl-[protein] + 2 oxidized [2Fe-2S]-[ferredoxin] + 2 S-adenosyl-L-methionine + 4 H(+) = [[Fe-S] cluster scaffold protein] + N(6)-[(R)-dihydrolipoyl]-L-lysyl-[protein] + 4 Fe(3+) + 2 hydrogen sulfide + 2 5'-deoxyadenosine + 2 L-methionine + 2 reduced [2Fe-2S]-[ferredoxin]. It participates in protein modification; protein lipoylation via endogenous pathway; protein N(6)-(lipoyl)lysine from octanoyl-[acyl-carrier-protein]: step 2/2. Catalyzes the radical-mediated insertion of two sulfur atoms into the C-6 and C-8 positions of the octanoyl moiety bound to the lipoyl domains of lipoate-dependent enzymes, thereby converting the octanoylated domains into lipoylated derivatives. In Xanthomonas campestris pv. campestris (strain B100), this protein is Lipoyl synthase.